Reading from the N-terminus, the 163-residue chain is UPF0763 protein C8J_0930 (163 aa).

Belongs to the UPF0763 family.

This is UPF0763 protein C8J_0930 from Campylobacter jejuni subsp. jejuni serotype O:6 (strain 81116 / NCTC 11828).